Here is a 225-residue protein sequence, read N- to C-terminus: Small ribosomal subunit protein uS3 (225 aa).

In terms of domain architecture, KH type-2 spans 38-106 (IRRFLQKKFK…PIGMNIIEVK (69 aa)).

Belongs to the universal ribosomal protein uS3 family. As to quaternary structure, part of the 30S ribosomal subunit. Forms a tight complex with proteins S10 and S14.

Binds the lower part of the 30S subunit head. Binds mRNA in the 70S ribosome, positioning it for translation. This Leptospira biflexa serovar Patoc (strain Patoc 1 / Ames) protein is Small ribosomal subunit protein uS3.